A 136-amino-acid polypeptide reads, in one-letter code: Invertebrate-type lysozyme (136 aa).

The N-terminal stretch at 1 to 11 (METVSVEEGLD) is a signal peptide. The I-type lysozyme domain maps to 14–130 (PGMVSQKCLL…WELLQKIPGC (117 aa)). 7 disulfides stabilise this stretch: cysteine 21–cysteine 98, cysteine 24–cysteine 130, cysteine 26–cysteine 33, cysteine 38–cysteine 47, cysteine 60–cysteine 80, cysteine 70–cysteine 76, and cysteine 94–cysteine 112. Catalysis depends on glutamate 29, which acts as the Proton donor. Aspartate 41 acts as the Nucleophile in catalysis. Residue 53–59 (KQPYWID) coordinates substrate. The N-linked (GlcNAc...) asparagine glycan is linked to asparagine 75. Residues tyrosine 84, tyrosine 92, 105-107 (HNG), and lysine 119 contribute to the substrate site.

As to quaternary structure, homodimer in its autoinhibited state. Active as monomer.

Its subcellular location is the secreted. It catalyses the reaction Hydrolysis of (1-&gt;4)-beta-linkages between N-acetylmuramic acid and N-acetyl-D-glucosamine residues in a peptidoglycan and between N-acetyl-D-glucosamine residues in chitodextrins.. With respect to regulation, chitinase activity is activated by high salt concentrations which cause the release of the monomer from the autoinhibited homodimer. In terms of biological role, bacteriolytic activity against Gram-positive bacterium M.luteus and thereby probably protects against bacterial infection. Also has chitinase activity. May act as an ispopeptidase, cleaving isopeptide bonds between the side chains of Lys and Gln residues in proteins or in the cross-linking peptide of peptidoglycan in bacterial cell walls. The chain is Invertebrate-type lysozyme from Ruditapes philippinarum (Japanese carpet shell).